The chain runs to 727 residues: Pentatricopeptide repeat-containing protein At4g20740 (727 aa).

The disordered stretch occupies residues 1–84 (MKSPKPPNLS…PSPPSHSTVI (84 aa)). The segment covering 38–56 (SNRQSIPRVSPQPQSNSLA) has biased composition (polar residues). The segment covering 59–70 (TPFDLRKWDPET) has biased composition (basic and acidic residues). PPR repeat units lie at residues 157-191 (DFAAYNAFAYCLNRNGHFRAADQLPELMDSQGRPP), 192-226 (SEKQFEILIRMHADNRRGLRVYYVYEKMKKFGFKP), 227-261 (RVFLYNRIMDALVKNGYFDLALAVYEDFKEDGLVE), 262-296 (ESTTFMILVKGLCKAGRIEEMLEILQRMRENLCKP), 297-331 (DVFAYTAMIKTLVSEGNLDASLRVWDEMRRDEIKP), 332-366 (DVMAYGTLVVGLCKDGRVERGYELFMEMKGKQILI), 367-401 (DREIYRVLIEGFVADGKVRSACNLWEDLVDSGYIA), 402-436 (DIGIYNAVIKGLCSVNQVDKAYKLFQVAIEEELEP), 437-471 (DFETLSPIMVAYVVMNRLSDFSNVLERIGELGYPV), 506-540 (SVSVYNILMEALYKMGDIQKSLSLFYEMRKLGFEP), 541-575 (DSSSYSIAICCFVEKGDVKAACSFHEKIIEMSCVP), 576-606 (SIAAYLSLTKGLCQIGEIDAVMLLVRECLGN), 612-646 (MEFKYALTVCHVCKGSNAEKVMKVVDEMNQEGVFI), and 647-681 (NEVIYCAIISGMSKHGTIKVAREVFTELKKRKVMT).

This sequence belongs to the PPR family. P subfamily.

The protein is Pentatricopeptide repeat-containing protein At4g20740 of Arabidopsis thaliana (Mouse-ear cress).